The following is a 610-amino-acid chain: UvrABC system protein C (610 aa).

The GIY-YIG domain maps to 16-94 (SQPGVYRMYD…IKLYQPRYNV (79 aa)). A UVR domain is found at 204–239 (QQVLNQLISRMESASRDLRFEDAARIRDQIQAVRRV).

Belongs to the UvrC family. As to quaternary structure, interacts with UvrB in an incision complex.

Its subcellular location is the cytoplasm. Functionally, the UvrABC repair system catalyzes the recognition and processing of DNA lesions. UvrC both incises the 5' and 3' sides of the lesion. The N-terminal half is responsible for the 3' incision and the C-terminal half is responsible for the 5' incision. In Pectobacterium atrosepticum (strain SCRI 1043 / ATCC BAA-672) (Erwinia carotovora subsp. atroseptica), this protein is UvrABC system protein C.